A 163-amino-acid chain; its full sequence is Phosphopantetheine adenylyltransferase (163 aa).

Threonine 9 is a binding site for substrate. ATP contacts are provided by residues 9–10 (TF) and histidine 17. Residues lysine 41, threonine 73, and arginine 87 each contribute to the substrate site. ATP-binding positions include 88–90 (GLR), glutamate 98, and 123–129 (FSFISSS).

It belongs to the bacterial CoaD family. In terms of assembly, homohexamer. It depends on Mg(2+) as a cofactor.

Its subcellular location is the cytoplasm. It catalyses the reaction (R)-4'-phosphopantetheine + ATP + H(+) = 3'-dephospho-CoA + diphosphate. Its pathway is cofactor biosynthesis; coenzyme A biosynthesis; CoA from (R)-pantothenate: step 4/5. Functionally, reversibly transfers an adenylyl group from ATP to 4'-phosphopantetheine, yielding dephospho-CoA (dPCoA) and pyrophosphate. This chain is Phosphopantetheine adenylyltransferase, found in Desulfitobacterium hafniense (strain Y51).